Here is an 838-residue protein sequence, read N- to C-terminus: V-type proton ATPase 116 kDa subunit a 1 (838 aa).

Residues 1-388 (MGELFRSEEM…DAYGIGTYRE (388 aa)) lie on the Cytoplasmic side of the membrane. A phosphothreonine mark is found at Thr250 and Thr360. Tyr364 carries the phosphotyrosine modification. Residues 389 to 407 (INPAPYTIITFPFLFAVMF) form a helical membrane-spanning segment. Residues 408-409 (GD) are Vacuolar-facing. The helical transmembrane segment at 410 to 426 (LGHGILMTLFAVWMVLK) threads the bilayer. At 427 to 441 (ESRILSQKNENEMFS) the chain is on the cytoplasmic side. Residues 442 to 471 (TIFSGRYIILLMGVFSIYTGLIYNDCFSKS) traverse the membrane as a helical segment. Over 472–535 (LNIFGSSWSV…ATNKLTFLNS (64 aa)) the chain is Vacuolar. The helical transmembrane segment at 536–555 (FKMKMSVILGIIHMLFGVSL) threads the bilayer. Residues 556–573 (SLFNHTYFKKPLNIYFGF) lie on the Cytoplasmic side of the membrane. A helical membrane pass occupies residues 574–594 (IPEIIFMTSLFGYLVILIFYK). Residues 595 to 639 (WTAYNAKTSEKAPSLLIHFINMFLFSYGDSGNSMLYSGQKGIQCF) lie on the Vacuolar side of the membrane. Residues 640–659 (LVVVALLCVPWMLLFKPLVL) form a helical membrane-spanning segment. Over 660–725 (RRQYLRRKHL…DTMVHQAIHT (66 aa)) the chain is Cytoplasmic. The chain crosses the membrane as a helical span at residues 726–750 (IEYCLGCISNTASYLRLWALSLAHA). The Vacuolar portion of the chain corresponds to 751–771 (QLSEVLWTMVIHIGLKVKSLA). The chain crosses the membrane as a helical span at residues 772–810 (GGLALFFIFAAFATLTVAILLIMEGLSAFLHALRLHWVE). Residues 811-838 (FQNKFYSGTGFKFLPFSFEHIREGKFDD) lie on the Cytoplasmic side of the membrane.

It belongs to the V-ATPase 116 kDa subunit family. As to quaternary structure, V-ATPase is a heteromultimeric enzyme made up of two complexes: the ATP-hydrolytic V1 complex and the proton translocation V0 complex. The V1 complex consists of three catalytic AB heterodimers that form a heterohexamer, three peripheral stalks each consisting of EG heterodimers, one central rotor including subunits D and F, and the regulatory subunits C and H. The proton translocation complex V0 consists of the proton transport subunit a, a ring of proteolipid subunits c9c'', rotary subunit d, subunits e and f, and the accessory subunits ATP6AP1/Ac45 and ATP6AP2/PRR. Interacts with SPAAR. In terms of tissue distribution, expressed in brain (at protein level). As to expression, expressed heart, kidney, liver, spleen, and to a lesser extent in brain.

Its subcellular location is the cytoplasmic vesicle. It is found in the clathrin-coated vesicle membrane. The protein localises to the secretory vesicle. The protein resides in the synaptic vesicle membrane. It localises to the melanosome. Its function is as follows. Subunit of the V0 complex of vacuolar(H+)-ATPase (V-ATPase), a multisubunit enzyme composed of a peripheral complex (V1) that hydrolyzes ATP and a membrane integral complex (V0) that translocates protons. V-ATPase is responsible for the acidification of various organelles, such as lysosomes, endosomes, the trans-Golgi network, and secretory granules, including synaptic vesicles. In certain cell types, can be exported to the plasma membrane, where it is involved in the acidification of the extracellular environment. Required for assembly and activity of the vacuolar ATPase. Through its action on compartment acidification, plays an essential role in neuronal development in terms of integrity and connectivity of neurons. The sequence is that of V-type proton ATPase 116 kDa subunit a 1 (ATP6V0A1) from Bos taurus (Bovine).